A 415-amino-acid chain; its full sequence is MTQTLDTKEDPLNLGGGWASSAPLRTWSFGPRRRRGAPVYRRRPRYGPKAEYEPPRKQAKQQYGPGPWFQPPWRPYWAVYSNWGRWRGPWCPPPAGFRKPPGRVQVIRVYGLHPLCLCCCSCCHGPWNPGWARPPGRKKRWGRRGRGLRRHPRRSAQRSPPVDLSTLLRPVNLYGWRAPGMRAPRNTTQFIMNQIYEDMRQQEKLERQQEALRAQQAQAASTASPEGAFGNDVPPSGGQEDEELQDTLYSFVRNPSLVFSPDPDEEKQTATSQLVEEEEEGEREEEEEEWCDEEECDGKELESQEEDEESEAKDEEDEESEAKDEEEGEEADYMEEREEEDEEDEAEEIAEEEEGLAEDEQTEEENHLPLEMPLSFLVGAEEERENFMNCTYLSPKQGIPKVAQEALFMVQDINC.

Residues 1 to 11 show a composition bias toward basic and acidic residues; the sequence is MTQTLDTKEDP. Disordered regions lie at residues 1–20, 29–64, 133–162, 202–241, and 255–372; these read MTQT…GWAS, FGPR…QQYG, RPPG…SPPV, QEKL…GQED, and PSLV…PLEM. Basic residues-rich tracts occupy residues 31-46 and 135-156; these read PRRR…RPRY and PGRK…RRSA. Coiled-coil stretches lie at residues 197-224 and 264-366; these read EDMR…STAS and DEEK…EEEN. Residues 211–220 are compositionally biased toward low complexity; it reads ALRAQQAQAA. Residues 275–363 are compositionally biased toward acidic residues; the sequence is VEEEEEGERE…EGLAEDEQTE (89 aa).

Its subcellular location is the nucleus. In terms of biological role, regulator of histone epigenetic modifications and chromatin compaction into the sperm head, required for histone-to-protamine (HTP) transition. HTP is a key event in which somatic histones are first replaced by testis-specific histone variants, then transition proteins (TNPs) are incorporated into the spermatid nucleus, and finally protamines (PRMs) replace the TNPs to promote chromatin condensation. The polypeptide is Coiled-coil domain-containing glutamate-rich protein 1 (CCER1) (Bos taurus (Bovine)).